A 104-amino-acid chain; its full sequence is L-rhamnose mutarotase (104 aa).

Tyrosine 18 contributes to the substrate binding site. Histidine 22 serves as the catalytic Proton donor. Substrate is bound by residues tyrosine 41 and 76 to 77 (WW).

This sequence belongs to the rhamnose mutarotase family. In terms of assembly, homodimer.

The protein localises to the cytoplasm. The catalysed reaction is alpha-L-rhamnose = beta-L-rhamnose. It participates in carbohydrate metabolism; L-rhamnose metabolism. Functionally, involved in the anomeric conversion of L-rhamnose. In Burkholderia ambifaria (strain MC40-6), this protein is L-rhamnose mutarotase.